A 440-amino-acid polypeptide reads, in one-letter code: MDYELLKRLDPEVFEAIANETRRQTETLELIASENFTSTAVMEACGSVMTNKYAEGYPGKRYYGGCEFVDVAENLARDRAKKLFGCEYVNVQPHSGSSANMAVLFAVLKPGDSIMGLDLSHGGHLTHGSKVNFSGQFFDAHSYGVDKETGIIDMNAVEEMALKVKPKLIITGASAYSQGFDFKAFREIADKVGAFLMADIAHPAGLVAAGLSANPVPHCHFVTTTTHKTLRGPRGGMIMMGKDFENPMGITVNTKNGPRVKMMSEVIDAEVMPGIQGGPLMHIIAGKAVAFGEALQPEFKAYAQQIKDNAAAMAAKFLAADYHIVSGGTKNHLMLLDLRNKNVNGKVAENLLHDAGITVNKNMVPFDDKSPFVTSGIRVGTPAMTTRGMKVAEAEKIVEFIDRVISAANDDNVADVCKQVRAEVRELCLQFPLNGYGLQV.

(6S)-5,6,7,8-tetrahydrofolate-binding positions include Leu119 and 123 to 125; that span reads GHL. Position 228 is an N6-(pyridoxal phosphate)lysine (Lys228). 370 to 372 contacts (6S)-5,6,7,8-tetrahydrofolate; the sequence is SPF.

This sequence belongs to the SHMT family. As to quaternary structure, homodimer. The cofactor is pyridoxal 5'-phosphate.

It is found in the cytoplasm. The catalysed reaction is (6R)-5,10-methylene-5,6,7,8-tetrahydrofolate + glycine + H2O = (6S)-5,6,7,8-tetrahydrofolate + L-serine. Its pathway is one-carbon metabolism; tetrahydrofolate interconversion. The protein operates within amino-acid biosynthesis; glycine biosynthesis; glycine from L-serine: step 1/1. Catalyzes the reversible interconversion of serine and glycine with tetrahydrofolate (THF) serving as the one-carbon carrier. This reaction serves as the major source of one-carbon groups required for the biosynthesis of purines, thymidylate, methionine, and other important biomolecules. Also exhibits THF-independent aldolase activity toward beta-hydroxyamino acids, producing glycine and aldehydes, via a retro-aldol mechanism. This is Serine hydroxymethyltransferase from Chlorobaculum parvum (strain DSM 263 / NCIMB 8327) (Chlorobium vibrioforme subsp. thiosulfatophilum).